The sequence spans 54 residues: Photosystem II reaction center protein K (54 aa).

A propeptide spanning residues 1–17 (MLLEHVTITLLNNTSFA) is cleaved from the precursor. A helical transmembrane segment spans residues 29 to 49 (LIDVLPIIPLLFLLLAFVWQA).

Belongs to the PsbK family. As to quaternary structure, PSII is composed of 1 copy each of membrane proteins PsbA, PsbB, PsbC, PsbD, PsbE, PsbF, PsbH, PsbI, PsbJ, PsbK, PsbL, PsbM, PsbT, PsbY, PsbZ, Psb30/Ycf12, at least 3 peripheral proteins of the oxygen-evolving complex and a large number of cofactors. It forms dimeric complexes.

It is found in the plastid. The protein resides in the chloroplast thylakoid membrane. Functionally, one of the components of the core complex of photosystem II (PSII). PSII is a light-driven water:plastoquinone oxidoreductase that uses light energy to abstract electrons from H(2)O, generating O(2) and a proton gradient subsequently used for ATP formation. It consists of a core antenna complex that captures photons, and an electron transfer chain that converts photonic excitation into a charge separation. The chain is Photosystem II reaction center protein K from Euglena mutabilis.